The chain runs to 281 residues: Pantothenate synthetase (281 aa).

ATP is bound at residue 30-37 (MGYLHEGH). Catalysis depends on histidine 37, which acts as the Proton donor. Glutamine 61 serves as a coordination point for (R)-pantoate. Glutamine 61 provides a ligand contact to beta-alanine. Residue 147–150 (GEKD) participates in ATP binding. Position 153 (glutamine 153) interacts with (R)-pantoate. ATP contacts are provided by residues isoleucine 176 and 184–187 (KSSR).

Belongs to the pantothenate synthetase family. As to quaternary structure, homodimer.

It is found in the cytoplasm. The enzyme catalyses (R)-pantoate + beta-alanine + ATP = (R)-pantothenate + AMP + diphosphate + H(+). The protein operates within cofactor biosynthesis; (R)-pantothenate biosynthesis; (R)-pantothenate from (R)-pantoate and beta-alanine: step 1/1. In terms of biological role, catalyzes the condensation of pantoate with beta-alanine in an ATP-dependent reaction via a pantoyl-adenylate intermediate. The polypeptide is Pantothenate synthetase (Clostridium botulinum (strain 657 / Type Ba4)).